We begin with the raw amino-acid sequence, 281 residues long: Ribosomal RNA small subunit methyltransferase A (281 aa).

Residues Asn-35, Leu-37, Gly-62, Glu-83, Asp-107, and Asn-125 each coordinate S-adenosyl-L-methionine.

This sequence belongs to the class I-like SAM-binding methyltransferase superfamily. rRNA adenine N(6)-methyltransferase family. RsmA subfamily.

Its subcellular location is the cytoplasm. It catalyses the reaction adenosine(1518)/adenosine(1519) in 16S rRNA + 4 S-adenosyl-L-methionine = N(6)-dimethyladenosine(1518)/N(6)-dimethyladenosine(1519) in 16S rRNA + 4 S-adenosyl-L-homocysteine + 4 H(+). Functionally, specifically dimethylates two adjacent adenosines (A1518 and A1519) in the loop of a conserved hairpin near the 3'-end of 16S rRNA in the 30S particle. May play a critical role in biogenesis of 30S subunits. This is Ribosomal RNA small subunit methyltransferase A from Deinococcus geothermalis (strain DSM 11300 / CIP 105573 / AG-3a).